We begin with the raw amino-acid sequence, 137 residues long: Small ribosomal subunit protein uS12 (137 aa).

The disordered stretch occupies residues 1 to 57 (MPTINQLVRKPRKSKVKKSKSPALNVGYNSRKKVQTNVSSPQKRGVATRVGTMTPKK). Basic residues predominate over residues 9–20 (RKPRKSKVKKSK). Asp-102 is modified (3-methylthioaspartic acid).

This sequence belongs to the universal ribosomal protein uS12 family. In terms of assembly, part of the 30S ribosomal subunit. Contacts proteins S8 and S17. May interact with IF1 in the 30S initiation complex.

Functionally, with S4 and S5 plays an important role in translational accuracy. In terms of biological role, interacts with and stabilizes bases of the 16S rRNA that are involved in tRNA selection in the A site and with the mRNA backbone. Located at the interface of the 30S and 50S subunits, it traverses the body of the 30S subunit contacting proteins on the other side and probably holding the rRNA structure together. The combined cluster of proteins S8, S12 and S17 appears to hold together the shoulder and platform of the 30S subunit. The polypeptide is Small ribosomal subunit protein uS12 (Streptococcus suis (strain 05ZYH33)).